We begin with the raw amino-acid sequence, 70 residues long: Large ribosomal subunit protein bL31 (70 aa).

Zn(2+) is bound by residues Cys16, Cys18, Cys37, and Cys40.

This sequence belongs to the bacterial ribosomal protein bL31 family. Type A subfamily. In terms of assembly, part of the 50S ribosomal subunit. Requires Zn(2+) as cofactor.

Functionally, binds the 23S rRNA. The chain is Large ribosomal subunit protein bL31 from Actinobacillus pleuropneumoniae serotype 5b (strain L20).